Consider the following 607-residue polypeptide: NAD-dependent malic enzyme 2, mitochondrial (607 aa).

The transit peptide at 1 to 32 directs the protein to the mitochondrion; that stretch reads MMWKNIAGLSKAAAAARTHGSRRCFSTAIPGP. Tyr-136 (proton donor) is an active-site residue. Residue Arg-189 coordinates NAD(+). Lys-207 functions as the Proton acceptor in the catalytic mechanism. 3 residues coordinate a divalent metal cation: Glu-278, Asp-279, and Asp-302. The NAD(+) site is built by Asp-302 and Asn-449.

This sequence belongs to the malic enzymes family. Homodimer. Heterodimer of two related subunits in NAD-MEH complex. Interacts with NAD-ME1. Requires Mg(2+) as cofactor. It depends on Mn(2+) as a cofactor. As to expression, expressed in leaves, stems, flowers, and roots (at protein level). Present in pollen.

Its subcellular location is the mitochondrion. It carries out the reaction (S)-malate + NAD(+) = pyruvate + CO2 + NADH. With respect to regulation, activated by 2-ketoglutarate, phosphoenolpyruvate (PEP), fructose 1,6-biphosphate (FBP) and coenzyme A (acetyl-CoA and CoA) as homodimer and by oxaloacetate (OAA), 2-ketoglutarate, succinate, fumarate and CoA as heterodimer NAD-MEH. Repressed by succinate and fumarate as homodimer, in the presence of NAD(+) and competitively toward the substrate L-malate. Its function is as follows. Involved in the regulation of sugars and amino acids metabolisms during the night period. This Arabidopsis thaliana (Mouse-ear cress) protein is NAD-dependent malic enzyme 2, mitochondrial (NAD-ME2).